A 314-amino-acid chain; its full sequence is 4-hydroxy-3-methylbut-2-enyl diphosphate reductase (314 aa).

Position 12 (C12) interacts with [4Fe-4S] cluster. 2 residues coordinate (2E)-4-hydroxy-3-methylbut-2-enyl diphosphate: H41 and H74. 2 residues coordinate dimethylallyl diphosphate: H41 and H74. Residues H41 and H74 each coordinate isopentenyl diphosphate. [4Fe-4S] cluster is bound at residue C96. H124 serves as a coordination point for (2E)-4-hydroxy-3-methylbut-2-enyl diphosphate. Residue H124 participates in dimethylallyl diphosphate binding. H124 serves as a coordination point for isopentenyl diphosphate. The Proton donor role is filled by E126. T168 lines the (2E)-4-hydroxy-3-methylbut-2-enyl diphosphate pocket. C198 lines the [4Fe-4S] cluster pocket. Residues S226, S227, N228, and S270 each contribute to the (2E)-4-hydroxy-3-methylbut-2-enyl diphosphate site. Dimethylallyl diphosphate is bound by residues S226, S227, N228, and S270. Positions 226, 227, 228, and 270 each coordinate isopentenyl diphosphate.

The protein belongs to the IspH family. The cofactor is [4Fe-4S] cluster.

The enzyme catalyses isopentenyl diphosphate + 2 oxidized [2Fe-2S]-[ferredoxin] + H2O = (2E)-4-hydroxy-3-methylbut-2-enyl diphosphate + 2 reduced [2Fe-2S]-[ferredoxin] + 2 H(+). It catalyses the reaction dimethylallyl diphosphate + 2 oxidized [2Fe-2S]-[ferredoxin] + H2O = (2E)-4-hydroxy-3-methylbut-2-enyl diphosphate + 2 reduced [2Fe-2S]-[ferredoxin] + 2 H(+). It functions in the pathway isoprenoid biosynthesis; dimethylallyl diphosphate biosynthesis; dimethylallyl diphosphate from (2E)-4-hydroxy-3-methylbutenyl diphosphate: step 1/1. The protein operates within isoprenoid biosynthesis; isopentenyl diphosphate biosynthesis via DXP pathway; isopentenyl diphosphate from 1-deoxy-D-xylulose 5-phosphate: step 6/6. Its function is as follows. Catalyzes the conversion of 1-hydroxy-2-methyl-2-(E)-butenyl 4-diphosphate (HMBPP) into a mixture of isopentenyl diphosphate (IPP) and dimethylallyl diphosphate (DMAPP). Acts in the terminal step of the DOXP/MEP pathway for isoprenoid precursor biosynthesis. This chain is 4-hydroxy-3-methylbut-2-enyl diphosphate reductase, found in Ectopseudomonas mendocina (strain ymp) (Pseudomonas mendocina).